The following is an 898-amino-acid chain: Protein translocase subunit SecA (898 aa).

ATP-binding positions include Gln-87, 105-109, and Asp-512; that span reads GEGKT. Positions 855–865 are enriched in polar residues; the sequence is MQYQNNEGTSS. The interval 855–898 is disordered; it reads MQYQNNEGTSSLHEKSEHKIGRNESCPCGSGKKYKHCHGSKAKY. A compositionally biased stretch (basic and acidic residues) spans 866 to 876; sequence LHEKSEHKIGR. Cys-880, Cys-882, Cys-891, and His-892 together coordinate Zn(2+). A compositionally biased stretch (basic residues) spans 886–898; it reads KKYKHCHGSKAKY.

This sequence belongs to the SecA family. As to quaternary structure, monomer and homodimer. Part of the essential Sec protein translocation apparatus which comprises SecA, SecYEG and auxiliary proteins SecDF-YajC and YidC. Zn(2+) serves as cofactor.

It localises to the cell inner membrane. The protein resides in the cytoplasm. It catalyses the reaction ATP + H2O + cellular proteinSide 1 = ADP + phosphate + cellular proteinSide 2.. Functionally, part of the Sec protein translocase complex. Interacts with the SecYEG preprotein conducting channel. Has a central role in coupling the hydrolysis of ATP to the transfer of proteins into and across the cell membrane, serving both as a receptor for the preprotein-SecB complex and as an ATP-driven molecular motor driving the stepwise translocation of polypeptide chains across the membrane. The protein is Protein translocase subunit SecA of Histophilus somni (strain 2336) (Haemophilus somnus).